Reading from the N-terminus, the 919-residue chain is Chaperone protein ClpC2, chloroplastic (919 aa).

Residues 1-54 (MAGTLLQPVALGTTFAGRVSGQRWKSHGTRRPPSMLAMSLSRPVKMAAFVGLRS) constitute a chloroplast transit peptide. The 143-residue stretch at 89–231 (FERFTEKAIK…RTQVIRMIGE (143 aa)) folds into the Clp R domain. Repeat regions lie at residues 92 to 157 (FTEK…IGRG) and 167 to 231 (FTPR…MIGE). The i stretch occupies residues 252-499 (LEEYGTNLTK…RVRLRHAQVP (248 aa)). Residue 297–304 (GEPGVGKT) coordinates ATP. A UVR domain is found at 506 to 541 (DKELKQITKDKNEAVRSQDFEKAGELRDREMELKAQ). The segment at 566–757 (VNEADIQHIV…LLIMTSNVGS (192 aa)) is II. 640–647 (GPTGVGKS) contacts ATP.

It belongs to the ClpA/ClpB family. ClpC subfamily.

Its subcellular location is the plastid. The protein localises to the chloroplast. Its function is as follows. Molecular chaperone that may interact with a ClpP-like protease involved in degradation of denatured proteins in the chloroplast. In Oryza sativa subsp. japonica (Rice), this protein is Chaperone protein ClpC2, chloroplastic (CLPC2).